The chain runs to 126 residues: uncharacterized protein (126 aa).

Transmembrane regions (helical) follow at residues 21 to 43 (LIVW…RIFS) and 48 to 70 (SVTF…LLLL).

Its subcellular location is the membrane. This is an uncharacterized protein from Saccharomyces cerevisiae (strain ATCC 204508 / S288c) (Baker's yeast).